The sequence spans 144 residues: Glutaredoxin-C6 (144 aa).

The 105-residue stretch at 39–143 (EAKIRRLISE…PKLVQVGALW (105 aa)) folds into the Glutaredoxin domain. A disulfide bridge connects residues C59 and C62.

It belongs to the glutaredoxin family. CC-type subfamily.

The protein localises to the cytoplasm. Functionally, has a glutathione-disulfide oxidoreductase activity in the presence of NADPH and glutathione reductase. Reduces low molecular weight disulfides and proteins. This Arabidopsis thaliana (Mouse-ear cress) protein is Glutaredoxin-C6 (GRXC6).